The primary structure comprises 98 residues: NADH-ubiquinone oxidoreductase chain 4L (98 aa).

The next 3 membrane-spanning stretches (helical) occupy residues 1-21, 30-50, and 61-81; these read MSPILINMLLAFTISLIGLLI, LLCLEGMMLSLFILTSTLALT, and IILLVFAACEAAIGLSLLVMV.

This sequence belongs to the complex I subunit 4L family. Core subunit of respiratory chain NADH dehydrogenase (Complex I) which is composed of 45 different subunits.

It is found in the mitochondrion inner membrane. It carries out the reaction a ubiquinone + NADH + 5 H(+)(in) = a ubiquinol + NAD(+) + 4 H(+)(out). Functionally, core subunit of the mitochondrial membrane respiratory chain NADH dehydrogenase (Complex I) which catalyzes electron transfer from NADH through the respiratory chain, using ubiquinone as an electron acceptor. Part of the enzyme membrane arm which is embedded in the lipid bilayer and involved in proton translocation. The polypeptide is NADH-ubiquinone oxidoreductase chain 4L (MT-ND4L) (Chrysochloris asiatica (Cape golden mole)).